We begin with the raw amino-acid sequence, 405 residues long: Glucose-1-phosphate adenylyltransferase (405 aa).

Alpha-D-glucose 1-phosphate contacts are provided by residues tyrosine 96, glycine 161, 176-177 (EK), and serine 194.

This sequence belongs to the bacterial/plant glucose-1-phosphate adenylyltransferase family. Homotetramer.

It catalyses the reaction alpha-D-glucose 1-phosphate + ATP + H(+) = ADP-alpha-D-glucose + diphosphate. The protein operates within glycan biosynthesis; glycogen biosynthesis. In terms of biological role, involved in the biosynthesis of ADP-glucose, a building block required for the elongation reactions to produce glycogen. Catalyzes the reaction between ATP and alpha-D-glucose 1-phosphate (G1P) to produce pyrophosphate and ADP-Glc. The sequence is that of Glucose-1-phosphate adenylyltransferase from Aliivibrio fischeri (strain ATCC 700601 / ES114) (Vibrio fischeri).